The following is a 206-amino-acid chain: Holliday junction branch migration complex subunit RuvA (206 aa).

Positions Met-1–Gln-64 are domain I. The segment at Ser-65–Ile-144 is domain II. The interval Gly-145 to Val-154 is flexible linker. The segment at Val-154–Arg-206 is domain III.

It belongs to the RuvA family. Homotetramer. Forms an RuvA(8)-RuvB(12)-Holliday junction (HJ) complex. HJ DNA is sandwiched between 2 RuvA tetramers; dsDNA enters through RuvA and exits via RuvB. An RuvB hexamer assembles on each DNA strand where it exits the tetramer. Each RuvB hexamer is contacted by two RuvA subunits (via domain III) on 2 adjacent RuvB subunits; this complex drives branch migration. In the full resolvosome a probable DNA-RuvA(4)-RuvB(12)-RuvC(2) complex forms which resolves the HJ.

The protein localises to the cytoplasm. In terms of biological role, the RuvA-RuvB-RuvC complex processes Holliday junction (HJ) DNA during genetic recombination and DNA repair, while the RuvA-RuvB complex plays an important role in the rescue of blocked DNA replication forks via replication fork reversal (RFR). RuvA specifically binds to HJ cruciform DNA, conferring on it an open structure. The RuvB hexamer acts as an ATP-dependent pump, pulling dsDNA into and through the RuvAB complex. HJ branch migration allows RuvC to scan DNA until it finds its consensus sequence, where it cleaves and resolves the cruciform DNA. This Mesorhizobium japonicum (strain LMG 29417 / CECT 9101 / MAFF 303099) (Mesorhizobium loti (strain MAFF 303099)) protein is Holliday junction branch migration complex subunit RuvA.